Here is a 223-residue protein sequence, read N- to C-terminus: Deoxyribose-phosphate aldolase 2 (223 aa).

Asp-92 (proton donor/acceptor) is an active-site residue. Lys-154 (schiff-base intermediate with acetaldehyde) is an active-site residue. The active-site Proton donor/acceptor is the Lys-183.

This sequence belongs to the DeoC/FbaB aldolase family. DeoC type 1 subfamily.

It is found in the cytoplasm. It carries out the reaction 2-deoxy-D-ribose 5-phosphate = D-glyceraldehyde 3-phosphate + acetaldehyde. Its pathway is carbohydrate degradation; 2-deoxy-D-ribose 1-phosphate degradation; D-glyceraldehyde 3-phosphate and acetaldehyde from 2-deoxy-alpha-D-ribose 1-phosphate: step 2/2. In terms of biological role, catalyzes a reversible aldol reaction between acetaldehyde and D-glyceraldehyde 3-phosphate to generate 2-deoxy-D-ribose 5-phosphate. The polypeptide is Deoxyribose-phosphate aldolase 2 (Oceanobacillus iheyensis (strain DSM 14371 / CIP 107618 / JCM 11309 / KCTC 3954 / HTE831)).